We begin with the raw amino-acid sequence, 250 residues long: uncharacterized protein (250 aa).

The stretch at 165–208 (HLNLETANTKATEYQKNYQEELKQRQELRQKLLQERTQKMLEAL) forms a coiled coil. Over residues 201 to 233 (TQKMLEALHQEETPEQDARDTAKKKTDQEEHTM) the composition is skewed to basic and acidic residues. The segment at 201 to 250 (TQKMLEALHQEETPEQDARDTAKKKTDQEEHTMRKANAPKTKASGEAPTP) is disordered.

This is an uncharacterized protein from Treponema pallidum (strain Nichols).